The primary structure comprises 73 residues: Translation initiation factor IF-1 (73 aa).

Positions 1–73 constitute an S1-like domain; that stretch reads MSKKKDVIEM…TRGRITYRYK (73 aa).

Belongs to the IF-1 family. Component of the 30S ribosomal translation pre-initiation complex which assembles on the 30S ribosome in the order IF-2 and IF-3, IF-1 and N-formylmethionyl-tRNA(fMet); mRNA recruitment can occur at any time during PIC assembly.

Its subcellular location is the cytoplasm. Its function is as follows. One of the essential components for the initiation of protein synthesis. Stabilizes the binding of IF-2 and IF-3 on the 30S subunit to which N-formylmethionyl-tRNA(fMet) subsequently binds. Helps modulate mRNA selection, yielding the 30S pre-initiation complex (PIC). Upon addition of the 50S ribosomal subunit IF-1, IF-2 and IF-3 are released leaving the mature 70S translation initiation complex. This is Translation initiation factor IF-1 from Chloroflexus aurantiacus (strain ATCC 29366 / DSM 635 / J-10-fl).